A 202-amino-acid polypeptide reads, in one-letter code: Endothelin-1 (202 aa).

The signal sequence occupies residues 1–25 (MDYLPVLFSLLLVVFQGAPEAAVLG). A propeptide spanning residues 26–50 (AELSTGPDSGGEKPAPSAPWRPRRS) is cleaved from the precursor. The segment at 28 to 48 (LSTGPDSGGEKPAPSAPWRPR) is disordered. Disulfide bonds link C53-C67 and C55-C63. Positions 74–202 (VNTPEHIVPY…EKKVTHNRTH (129 aa)) are excised as a propeptide. The tract at residues 110-124 (CQCASQKDKKCWTFC) is endothelin-like.

The protein belongs to the endothelin/sarafotoxin family.

Its subcellular location is the secreted. Endothelins are endothelium-derived vasoconstrictor peptides. Probable ligand for G-protein coupled receptors EDNRA and EDNRB which activates PTK2B, BCAR1, BCAR3 and, GTPases RAP1 and RHOA cascade in glomerular mesangial cells. Also binds the DEAR/FBXW7-AS1 receptor. Promotes mesenteric arterial wall remodeling via activation of ROCK signaling and subsequent colocalization of NFATC3 with F-actin filaments. NFATC3 then translocates to the nucleus where it subsequently promotes the transcription of the smooth muscle hypertrophy and differentiation marker ACTA2. This is Endothelin-1 (EDN1) from Felis catus (Cat).